Consider the following 190-residue polypeptide: Protein GrpE (190 aa).

A compositionally biased stretch (polar residues) spans 1–11 (MSNQDEPQNSP). The disordered stretch occupies residues 1-36 (MSNQDEPQNSPEEFAEDQQADVALEEASSDSSETAA). Residues 13-28 (EFAEDQQADVALEEAS) show a composition bias toward acidic residues.

The protein belongs to the GrpE family. As to quaternary structure, homodimer.

The protein localises to the cytoplasm. In terms of biological role, participates actively in the response to hyperosmotic and heat shock by preventing the aggregation of stress-denatured proteins, in association with DnaK and GrpE. It is the nucleotide exchange factor for DnaK and may function as a thermosensor. Unfolded proteins bind initially to DnaJ; upon interaction with the DnaJ-bound protein, DnaK hydrolyzes its bound ATP, resulting in the formation of a stable complex. GrpE releases ADP from DnaK; ATP binding to DnaK triggers the release of the substrate protein, thus completing the reaction cycle. Several rounds of ATP-dependent interactions between DnaJ, DnaK and GrpE are required for fully efficient folding. The sequence is that of Protein GrpE from Teredinibacter turnerae (strain ATCC 39867 / T7901).